We begin with the raw amino-acid sequence, 256 residues long: Nuclear shuttle protein (256 aa).

Positions 21 to 42 (NSLIRQQSLFKRNVSKRRPFQT) match the Bipartite nuclear localization signal motif. The short motif at 81–96 (DIAKSLPNRTRSYIKL) is the Nuclear localization signal element. Positions 150 to 187 (ELFGARIHSHGNLAIVPSLKDRFYIRHVLKRVISVEKD) are interaction with Arabidopsis thaliana NSI protein.

It belongs to the begomovirus nuclear shuttle protein family. In terms of assembly, binds to single-stranded and double-stranded viral DNA. Interacts with the host nuclear shuttle interacting (NSI) protein. This interaction may allow NSP to recruit NSI monomers to the viral genome and thus regulate nuclear export of viral genome by NSP.

The protein localises to the host nucleus. Its subcellular location is the host cytoplasm. The protein resides in the host cell membrane. Its function is as follows. Binds to the genomic viral ssDNA, shuttles it into and out of the cell nucleus. Begomoviruses use 2 proteins to transport their DNA from cell to cell. The nuclear shuttle protein (NSP) shuttles it between nucleus and cytoplasm and the movement protein (MP) probably transports the DNA-NSP complex to the cell periphery and facilitates movement across the cell wall. This is Nuclear shuttle protein from Potato yellow mosaic virus (isolate Venezuela) (PYMV).